We begin with the raw amino-acid sequence, 329 residues long: Phospholipid scramblase 4 (329 aa).

The disordered stretch occupies residues 1–51 (MSGVVPTAPEQPAGEMENQTKPPDPRPDAPPEYNSHFLPGPPGTAVPPPTG). The segment at 1–98 (MSGVVPTAPE…PMPNQSVPIT (98 aa)) is proline-rich domain (PRD). Residues 1–303 (MSGVVPTAPE…IHFPLDLDVK (303 aa)) lie on the Cytoplasmic side of the membrane. The SH3-binding 1 signature appears at 18 to 25 (NQTKPPDP). Residues 30 to 33 (PPEY) carry the PPxY motif motif. Residues 39–51 (PGPPGTAVPPPTG) are compositionally biased toward pro residues. The SH3-binding 2 signature appears at 41–49 (PPGTAVPPP). Phosphotyrosine; by ABL is present on residues Tyr83 and Tyr88. Residues 98-106 (TWMPGPTPM) carry the SH3-binding 3 motif. Residues Cys197, Cys198, Cys199, Cys201, and Cys202 are each lipidated (S-palmitoyl cysteine). The Nuclear localization signal signature appears at 271–283 (NIGSIIRKWNGLL). Residues 304 to 320 (MKAMIFGACFLIDFMYF) form a helical membrane-spanning segment. The Extracellular segment spans residues 321–329 (ERSPPQRSR).

Belongs to the phospholipid scramblase family. Interacts with PDCD6. Interacts with KPNA2; this interaction mediates the nucleus import of PLSCR4. Ca(2+) serves as cofactor. It depends on Mg(2+) as a cofactor. The cofactor is Zn(2+). As to expression, expressed in heart, brain, placenta, lung, liver, kidney, pancreas, spleen, thymus, prostate, testis, uterus, small intestine and colon. Not detected in peripheral blood lymphocytes.

Its subcellular location is the cell membrane. It localises to the nucleus. It carries out the reaction a 1,2-diacyl-sn-glycero-3-phosphocholine(in) = a 1,2-diacyl-sn-glycero-3-phosphocholine(out). The catalysed reaction is a 1,2-diacyl-sn-glycero-3-phospho-L-serine(in) = a 1,2-diacyl-sn-glycero-3-phospho-L-serine(out). In terms of biological role, catalyzes metal ion-induced ATP-independent rapid bidirectional and non-specific movement of phospholipids (lipid scrambling or lipid flip-flop) between the inner and outer leaflet of the plasma membrane and participates in the redistribution of phospholipids between membrane leaflets. Metal ions bind to the calcium-binding site and induce conformation change in the protein. Has a greater affi nity for Ca(2+) than Mg(2+) and Zn(2+). The protein is Phospholipid scramblase 4 of Homo sapiens (Human).